The sequence spans 872 residues: Alanine--tRNA ligase (872 aa).

4 residues coordinate Zn(2+): His-567, His-571, Cys-669, and His-673.

The protein belongs to the class-II aminoacyl-tRNA synthetase family. Zn(2+) serves as cofactor.

It is found in the cytoplasm. It carries out the reaction tRNA(Ala) + L-alanine + ATP = L-alanyl-tRNA(Ala) + AMP + diphosphate. In terms of biological role, catalyzes the attachment of alanine to tRNA(Ala) in a two-step reaction: alanine is first activated by ATP to form Ala-AMP and then transferred to the acceptor end of tRNA(Ala). Also edits incorrectly charged Ser-tRNA(Ala) and Gly-tRNA(Ala) via its editing domain. The chain is Alanine--tRNA ligase from Streptococcus pyogenes serotype M12 (strain MGAS2096).